Consider the following 1320-residue polypeptide: Inner centromere protein A (1320 aa).

Disordered stretches follow at residues 53-75, 426-447, 611-679, 701-877, and 896-1215; these read KNSNYLNNNNNNNNNNNNNNNIS, QEKQQQQQEKQQEKQQQQQPVV, NEPI…VVPP, EEEE…NTAS, and TKSP…DGDE. Low complexity-rich tracts occupy residues 54 to 75, 429 to 447, and 615 to 640; these read NSNYLNNNNNNNNNNNNNNNIS, QQQQQEKQQEKQQQQQPVV, and QQPSSSSSQLSSSQQPSSSSSSSSSS. Positions 221–444 form a coiled coil; that stretch reads QQNQFQEQHK…KQQEKQQQQQ (224 aa). A compositionally biased stretch (polar residues) spans 653-668; the sequence is TIVTSKPTNKVQPQSL. A compositionally biased stretch (low complexity) spans 669–679; that stretch reads NSNINNNVVPP. A coiled-coil region spans residues 683-855; it reads AAIANKLKKQ…QKKKTVQTIL (173 aa). Residues 701–835 show a composition bias toward basic and acidic residues; sequence EEEERLRKKQ…QEKEKQEKQK (135 aa). A compositionally biased stretch (polar residues) spans 851–863; it reads VQTILPTPQTPSR. Over residues 864–877 the composition is skewed to low complexity; the sequence is SANNNYDDAANTAS. 2 stretches are compositionally biased toward acidic residues: residues 908–926 and 934–951; these read DDQDDDDCEDYDGTDENSE and QDDSDQEIEEQFENDSDE. Over residues 965–977 the composition is skewed to low complexity; it reads NKNKNSNNSNNNN. Positions 981–1000 are enriched in basic and acidic residues; sequence QSRKDKSIVFDSDSLNRNHN. 2 stretches are compositionally biased toward low complexity: residues 1026–1040 and 1047–1061; these read SNMKNNNNNNTYSNS and SPPSSVSDYSPSSES. The segment covering 1062-1071 has biased composition (polar residues); the sequence is NDCFSPLTPT. Low complexity predominate over residues 1072–1096; that stretch reads NNNKINNNKINNNNSNNNSFNNSNS. Residues 1120–1136 are compositionally biased toward polar residues; sequence SKTSPFLTIRNTPSPLK. Residues 1143-1154 show a composition bias toward low complexity; sequence NMSSASSLSSFD. Over residues 1155 to 1170 the composition is skewed to acidic residues; sequence SDNDSDYNDNDIDDGE. The span at 1175 to 1187 shows a compositional bias: polar residues; sequence PNENFTTPLKNQE. Residues 1188-1198 are compositionally biased toward low complexity; the sequence is NNNNNNSNNSN. The segment covering 1199–1209 has biased composition (polar residues); the sequence is TQYPIITSPPS.

The protein belongs to the INCENP family. Interacts with aurK.

Its subcellular location is the chromosome. It is found in the centromere. The protein localises to the cytoplasm. It localises to the cytoskeleton. The protein resides in the spindle. Its subcellular location is the nucleus. It is found in the cleavage furrow. Functionally, chromosomal passenger protein that seems to be required for chromosome segregation and the onset of cytokinesis during mitosis. Plays a key role in the abscission of daughter cells at the end of cytokinesis and in the establishment or maintenance of a bipolar spindle. This chain is Inner centromere protein A (icpA), found in Dictyostelium discoideum (Social amoeba).